The sequence spans 351 residues: UDP-3-O-acylglucosamine N-acyltransferase (351 aa).

The Proton acceptor role is filled by H240.

The protein belongs to the transferase hexapeptide repeat family. LpxD subfamily. In terms of assembly, homotrimer.

It catalyses the reaction a UDP-3-O-[(3R)-3-hydroxyacyl]-alpha-D-glucosamine + a (3R)-hydroxyacyl-[ACP] = a UDP-2-N,3-O-bis[(3R)-3-hydroxyacyl]-alpha-D-glucosamine + holo-[ACP] + H(+). The protein operates within bacterial outer membrane biogenesis; LPS lipid A biosynthesis. In terms of biological role, catalyzes the N-acylation of UDP-3-O-acylglucosamine using 3-hydroxyacyl-ACP as the acyl donor. Is involved in the biosynthesis of lipid A, a phosphorylated glycolipid that anchors the lipopolysaccharide to the outer membrane of the cell. The polypeptide is UDP-3-O-acylglucosamine N-acyltransferase (Ectopseudomonas mendocina (strain ymp) (Pseudomonas mendocina)).